The sequence spans 344 residues: GTPase Obg (344 aa).

Positions 1–159 constitute an Obg domain; it reads MKFLDQAKVY…RWIWLRLKLI (159 aa). The region spanning 160–327 is the OBG-type G domain; sequence ADAGLVGLPN…ALRLLLSVVE (168 aa). Residues 166-173, 191-195, 212-215, 279-282, and 308-310 each bind GTP; these read GLPNAGKS, FTTLH, DIPG, SKVD, and SAQ. Mg(2+) contacts are provided by Ser173 and Thr193.

This sequence belongs to the TRAFAC class OBG-HflX-like GTPase superfamily. OBG GTPase family. In terms of assembly, monomer. Mg(2+) is required as a cofactor.

Its subcellular location is the cytoplasm. Functionally, an essential GTPase which binds GTP, GDP and possibly (p)ppGpp with moderate affinity, with high nucleotide exchange rates and a fairly low GTP hydrolysis rate. Plays a role in control of the cell cycle, stress response, ribosome biogenesis and in those bacteria that undergo differentiation, in morphogenesis control. The chain is GTPase Obg from Xanthobacter autotrophicus (strain ATCC BAA-1158 / Py2).